The following is a 436-amino-acid chain: Trigger factor (436 aa).

Residues 161–248 form the PPIase FKBP-type domain; that stretch reads TDRVTIDLYG…LKKVEQYRLP (88 aa).

It belongs to the FKBP-type PPIase family. Tig subfamily.

The protein localises to the cytoplasm. The enzyme catalyses [protein]-peptidylproline (omega=180) = [protein]-peptidylproline (omega=0). Its function is as follows. Involved in protein export. Acts as a chaperone by maintaining the newly synthesized protein in an open conformation. Functions as a peptidyl-prolyl cis-trans isomerase. The sequence is that of Trigger factor from Baumannia cicadellinicola subsp. Homalodisca coagulata.